Consider the following 309-residue polypeptide: Methionyl-tRNA formyltransferase (309 aa).

107-110 (SLLP) lines the (6S)-5,6,7,8-tetrahydrofolate pocket.

The protein belongs to the Fmt family.

It carries out the reaction L-methionyl-tRNA(fMet) + (6R)-10-formyltetrahydrofolate = N-formyl-L-methionyl-tRNA(fMet) + (6S)-5,6,7,8-tetrahydrofolate + H(+). Functionally, attaches a formyl group to the free amino group of methionyl-tRNA(fMet). The formyl group appears to play a dual role in the initiator identity of N-formylmethionyl-tRNA by promoting its recognition by IF2 and preventing the misappropriation of this tRNA by the elongation apparatus. The chain is Methionyl-tRNA formyltransferase from Borrelia hermsii (strain HS1 / DAH).